Here is a 393-residue protein sequence, read N- to C-terminus: 8-amino-7-oxononanoate synthase (393 aa).

108–109 (GF) contributes to the pyridoxal 5'-phosphate binding site. Histidine 133 serves as a coordination point for substrate. Pyridoxal 5'-phosphate is bound by residues serine 182, 207-210 (DDAH), and 238-241 (TLSK). N6-(pyridoxal phosphate)lysine is present on lysine 241. Threonine 355 contributes to the substrate binding site.

Belongs to the class-II pyridoxal-phosphate-dependent aminotransferase family. BioF subfamily. As to quaternary structure, homodimer. It depends on pyridoxal 5'-phosphate as a cofactor.

The catalysed reaction is 6-carboxyhexanoyl-[ACP] + L-alanine + H(+) = (8S)-8-amino-7-oxononanoate + holo-[ACP] + CO2. It functions in the pathway cofactor biosynthesis; biotin biosynthesis. In terms of biological role, catalyzes the decarboxylative condensation of pimeloyl-[acyl-carrier protein] and L-alanine to produce 8-amino-7-oxononanoate (AON), [acyl-carrier protein], and carbon dioxide. The chain is 8-amino-7-oxononanoate synthase from Petrotoga mobilis (strain DSM 10674 / SJ95).